A 56-amino-acid chain; its full sequence is uncharacterized protein (56 aa).

This is an uncharacterized protein from Autographa californica nuclear polyhedrosis virus (AcMNPV).